The primary structure comprises 461 residues: Juvenile hormone epoxide hydrolase (461 aa).

A helical membrane pass occupies residues 4–24; the sequence is LLFIALPLLVLASIPLYLLVL. The active-site Nucleophile is the Asp227. The Proton donor role is filled by Tyr373. The Proton acceptor role is filled by His430.

This sequence belongs to the peptidase S33 family. In terms of assembly, homodimer. As to expression, expressed in fat body, foregut and midgut but not in brain, subesophageal ganglia or silk gland of larvae on day 1 of fifth instar.

It localises to the microsome membrane. The protein localises to the endoplasmic reticulum membrane. The enzyme catalyses cis-stilbene oxide + H2O = (1R,2R)-hydrobenzoin. It catalyses the reaction 1-(4-methoxyphenyl)-N-methyl-N-[(3-methyloxetan-3-yl)methyl]methanamine + H2O = 2-{[(4-methoxybenzyl)(methyl)amino]methyl}-2-methylpropane-1,3-diol. Functionally, catalyzes juvenile hormone hydrolysis. Degrades juvenile hormone III (JH III) about 3 times and 5 times slower than juvenile hormone I (JH I) and II (JH II), respectively. Degrades cis-stilbene oxide and trans-stilbene oxide about 18 and 43 times slower than JH III, respectively. The chain is Juvenile hormone epoxide hydrolase from Bombyx mori (Silk moth).